The sequence spans 972 residues: DNA topoisomerase 1 (972 aa).

Disordered stretches follow at residues 1-210 and 300-416; these read MSGD…VFVK and HEQS…RQKA. A compositionally biased stretch (polar residues) spans 11-31; sequence IHIQNGGSCEVVQSNGVTTNG. A compositionally biased stretch (basic residues) spans 32-50; it reads HGHHHHHHSSSSSSSKHKS. Composition is skewed to basic and acidic residues over residues 51–65, 72–86, and 93–103; these read SSKDKHRDREREHKS, SKEHKSSSRDKDRHK, and KHRDKDKERDG. The span at 104-114 shows a compositional bias: low complexity; the sequence is SSNSHRSGSSS. Over residues 125–138 the composition is skewed to basic residues; the sequence is SKHKSSSGHHKRSS. Residues 139–151 show a composition bias toward basic and acidic residues; it reads KDKERRDKDKDRG. Residues 173-183 show a composition bias toward low complexity; it reads SHKSSSSSSSS. At serine 303 the chain carries Phosphoserine. A Phosphotyrosine modification is found at tyrosine 304. A compositionally biased stretch (acidic residues) spans 316-330; that stretch reads HDDDADEMNDDEEDV. 3 interaction with DNA regions span residues 648 to 649, 711 to 716, and 807 to 809; these read KY, RAGNEK, and TAK. In terms of domain architecture, Topo IB-type catalytic spans 655-972; that stretch reads SSKLKGEKDH…VHMADENYRF (318 aa). The O-(3'-phospho-DNA)-tyrosine intermediate role is filled by tyrosine 930.

Belongs to the type IB topoisomerase family. As to quaternary structure, interacts with Topors.

The protein localises to the nucleus. It localises to the cytoplasm. The catalysed reaction is ATP-independent breakage of single-stranded DNA, followed by passage and rejoining.. In terms of biological role, releases the supercoiling and torsional tension of DNA introduced during the DNA replication and transcription by transiently cleaving and rejoining one strand of the DNA duplex. Introduces a single-strand break via transesterification at a target site in duplex DNA. The scissile phosphodiester is attacked by the catalytic tyrosine of the enzyme, resulting in the formation of a DNA-(3'-phosphotyrosyl)-enzyme intermediate and the expulsion of a 5'-OH DNA strand. The free DNA strand then undergoes passage around the unbroken strand thus removing DNA supercoils. Finally, in the religation step, the DNA 5'-OH attacks the covalent intermediate to expel the active-site tyrosine and restore the DNA phosphodiester backbone. The chain is DNA topoisomerase 1 from Drosophila melanogaster (Fruit fly).